The sequence spans 311 residues: Dehydrogenase/reductase SDR family member 7C (311 aa).

An N-terminal signal peptide occupies residues 1 to 18 (MGVTAVLMLPLLLLGISG). NAD(+)-binding residues include Ser-47, Leu-49, Tyr-191, Lys-195, and Ser-226. The active-site Proton acceptor is the Tyr-191.

The protein belongs to the short-chain dehydrogenases/reductases (SDR) family.

The protein localises to the sarcoplasmic reticulum membrane. The catalysed reaction is all-trans-retinol + NAD(+) = all-trans-retinal + NADH + H(+). Its function is as follows. NADH-dependent oxidoreductase which catalyzes the oxidation of all-trans-retinol to all-trans-retinal. Plays a role in the regulation of cardiac and skeletal muscle metabolic functions. Maintains Ca(2+) intracellular homeostasis by repressing Ca(2+) release from the sarcoplasmic reticulum (SR) in myotubes, possibly through local alternations in NAD/NADH or retinol/retinal. Also plays a role in Ca(2+) homeostasis by controlling Ca(2+) overload in the cytosol and the SR in myotubes. Involved in glucose uptake into skeletal muscles and muscle performance by activating PI3K and mTORC2-mediated AKT1 phosphorylation signaling pathways, possibly through the action of its downstream catalytic product all-trans-retinoic acid. This chain is Dehydrogenase/reductase SDR family member 7C (DHRS7C), found in Bos taurus (Bovine).